The chain runs to 419 residues: Serine hydroxymethyltransferase (419 aa).

Residues leucine 122 and glycine 126–leucine 128 each bind (6S)-5,6,7,8-tetrahydrofolate. Lysine 231 is subject to N6-(pyridoxal phosphate)lysine. Serine 354–phenylalanine 356 lines the (6S)-5,6,7,8-tetrahydrofolate pocket.

It belongs to the SHMT family. Homodimer. The cofactor is pyridoxal 5'-phosphate.

Its subcellular location is the cytoplasm. It catalyses the reaction (6R)-5,10-methylene-5,6,7,8-tetrahydrofolate + glycine + H2O = (6S)-5,6,7,8-tetrahydrofolate + L-serine. It functions in the pathway one-carbon metabolism; tetrahydrofolate interconversion. It participates in amino-acid biosynthesis; glycine biosynthesis; glycine from L-serine: step 1/1. Its function is as follows. Catalyzes the reversible interconversion of serine and glycine with tetrahydrofolate (THF) serving as the one-carbon carrier. This reaction serves as the major source of one-carbon groups required for the biosynthesis of purines, thymidylate, methionine, and other important biomolecules. Also exhibits THF-independent aldolase activity toward beta-hydroxyamino acids, producing glycine and aldehydes, via a retro-aldol mechanism. The sequence is that of Serine hydroxymethyltransferase from Exiguobacterium sibiricum (strain DSM 17290 / CCUG 55495 / CIP 109462 / JCM 13490 / 255-15).